The chain runs to 269 residues: Undecaprenyl-diphosphatase (269 aa).

The next 7 membrane-spanning stretches (helical) occupy residues tryptophan 42–phenylalanine 62, leucine 83–isoleucine 103, proline 110–valine 130, glycine 142–leucine 162, alanine 186–leucine 206, alanine 219–isoleucine 239, and phenylalanine 247–isoleucine 267.

This sequence belongs to the UppP family.

It localises to the cell inner membrane. The catalysed reaction is di-trans,octa-cis-undecaprenyl diphosphate + H2O = di-trans,octa-cis-undecaprenyl phosphate + phosphate + H(+). Catalyzes the dephosphorylation of undecaprenyl diphosphate (UPP). Confers resistance to bacitracin. The polypeptide is Undecaprenyl-diphosphatase (Caulobacter sp. (strain K31)).